The chain runs to 970 residues: Insulin-degrading enzyme-like 1, peroxisomal (970 aa).

His69 is a binding site for Zn(2+). The active-site Proton acceptor is the Glu72. His73 contacts Zn(2+). Residue Glu143 is part of the active site. Residue Glu150 participates in Zn(2+) binding.

Belongs to the peptidase M16 family. Zn(2+) is required as a cofactor.

Its subcellular location is the peroxisome. Functionally, peptidase that might be involved in pathogen or wound response. Not required for peroxisome biogenesis, indole-3-butyric acid (IBA) metabolism, fatty acid beta-oxidation or degradation of glyoxylate cycle enzymes during seedling development. In Arabidopsis thaliana (Mouse-ear cress), this protein is Insulin-degrading enzyme-like 1, peroxisomal (PXM16).